The following is a 421-amino-acid chain: 4-hydroxy-3-methylbut-2-en-1-yl diphosphate synthase (flavodoxin) (421 aa).

[4Fe-4S] cluster contacts are provided by Cys311, Cys314, Cys357, and Glu364.

It belongs to the IspG family. [4Fe-4S] cluster serves as cofactor.

It catalyses the reaction (2E)-4-hydroxy-3-methylbut-2-enyl diphosphate + oxidized [flavodoxin] + H2O + 2 H(+) = 2-C-methyl-D-erythritol 2,4-cyclic diphosphate + reduced [flavodoxin]. The protein operates within isoprenoid biosynthesis; isopentenyl diphosphate biosynthesis via DXP pathway; isopentenyl diphosphate from 1-deoxy-D-xylulose 5-phosphate: step 5/6. Its function is as follows. Converts 2C-methyl-D-erythritol 2,4-cyclodiphosphate (ME-2,4cPP) into 1-hydroxy-2-methyl-2-(E)-butenyl 4-diphosphate. This chain is 4-hydroxy-3-methylbut-2-en-1-yl diphosphate synthase (flavodoxin), found in Stenotrophomonas maltophilia (strain K279a).